A 100-amino-acid chain; its full sequence is MNQSKQSLSNWLLIGGVIALAVLPLIFVRDAEFTGADSQAEKAISEVKPGYEPWFKPLFEPPSGEVESLLFSSQAALGAGIIGYAVGLYKGRSQQQRHKE.

Transmembrane regions (helical) follow at residues 8-28 (LSNW…LIFV) and 69-89 (LLFS…VGLY).

This sequence belongs to the CbiN family. Forms an energy-coupling factor (ECF) transporter complex composed of an ATP-binding protein (A component, CbiO), a transmembrane protein (T component, CbiQ) and 2 possible substrate-capture proteins (S components, CbiM and CbiN) of unknown stoichimetry.

It localises to the cell inner membrane. It functions in the pathway cofactor biosynthesis; adenosylcobalamin biosynthesis. In terms of biological role, part of the energy-coupling factor (ECF) transporter complex CbiMNOQ involved in cobalt import. This chain is Cobalt transport protein CbiN, found in Nostoc sp. (strain PCC 7120 / SAG 25.82 / UTEX 2576).